We begin with the raw amino-acid sequence, 390 residues long: uncharacterized protein (390 aa).

This is an uncharacterized protein from Archaeoglobus fulgidus (strain ATCC 49558 / DSM 4304 / JCM 9628 / NBRC 100126 / VC-16).